Here is a 137-residue protein sequence, read N- to C-terminus: MSENQDLQQGFLETVKFDEKGLVPAIVQDHETGKVLMMAWMNRESLEMTLERKQACYWSRSRQKLWLKGESSGNMQDVHDILIDCDGDTILLKVSQKGGACHVGYHSCFYRKAKDDLSMEICDTLMFDPEEVYGKKS.

Aspartate 84 contributes to the Mg(2+) binding site. Cysteine 85 is a binding site for Zn(2+). 2 residues coordinate Mg(2+): aspartate 86 and aspartate 88. 2 residues coordinate Zn(2+): cysteine 101 and cysteine 108.

The protein belongs to the PRA-CH family. As to quaternary structure, homodimer. Mg(2+) is required as a cofactor. It depends on Zn(2+) as a cofactor.

The protein resides in the cytoplasm. It carries out the reaction 1-(5-phospho-beta-D-ribosyl)-5'-AMP + H2O = 1-(5-phospho-beta-D-ribosyl)-5-[(5-phospho-beta-D-ribosylamino)methylideneamino]imidazole-4-carboxamide. It participates in amino-acid biosynthesis; L-histidine biosynthesis; L-histidine from 5-phospho-alpha-D-ribose 1-diphosphate: step 3/9. Catalyzes the hydrolysis of the adenine ring of phosphoribosyl-AMP. This Chlorobium limicola (strain DSM 245 / NBRC 103803 / 6330) protein is Phosphoribosyl-AMP cyclohydrolase.